The sequence spans 213 residues: MITIVLLILAYLLGSIPSGLWIGQVFFQINLREHGSGNTGTTNTFRILGKKAGMATFVIDFFKGTLATLLPIIFHLQGVSPLIFGLLAVIGHTFPIFAGFKGGKAVATSAGVIFGFAPIFCLYLAIIFFGALYLGSMISLSSVTASIAAVIGVLLFPLFGFILSNYDSLFIAIILALASLIIIRHKDNIARIKNKTENLVPWGLNLTHQDPKK.

Helical transmembrane passes span 2–22, 52–74, 81–100, 112–132, 143–163, and 164–184; these read ITIVLLILAYLLGSIPSGLWI, AGMATFVIDFFKGTLATLLPIIF, PLIFGLLAVIGHTFPIFAGF, VIFGFAPIFCLYLAIIFFGAL, VTASIAAVIGVLLFPLFGFIL, and SNYDSLFIAIILALASLIIIR.

This sequence belongs to the PlsY family. As to quaternary structure, probably interacts with PlsX.

It is found in the cell membrane. It carries out the reaction an acyl phosphate + sn-glycerol 3-phosphate = a 1-acyl-sn-glycero-3-phosphate + phosphate. The protein operates within lipid metabolism; phospholipid metabolism. In terms of biological role, catalyzes the transfer of an acyl group from acyl-phosphate (acyl-PO(4)) to glycerol-3-phosphate (G3P) to form lysophosphatidic acid (LPA). This enzyme utilizes acyl-phosphate as fatty acyl donor, but not acyl-CoA or acyl-ACP. The polypeptide is Glycerol-3-phosphate acyltransferase (Streptococcus pneumoniae (strain ATCC 700669 / Spain 23F-1)).